The chain runs to 363 residues: Histidinol-phosphate aminotransferase (363 aa).

An N6-(pyridoxal phosphate)lysine modification is found at Lys-220.

This sequence belongs to the class-II pyridoxal-phosphate-dependent aminotransferase family. Histidinol-phosphate aminotransferase subfamily. As to quaternary structure, homodimer. Pyridoxal 5'-phosphate is required as a cofactor.

The catalysed reaction is L-histidinol phosphate + 2-oxoglutarate = 3-(imidazol-4-yl)-2-oxopropyl phosphate + L-glutamate. The protein operates within amino-acid biosynthesis; L-histidine biosynthesis; L-histidine from 5-phospho-alpha-D-ribose 1-diphosphate: step 7/9. The polypeptide is Histidinol-phosphate aminotransferase (Chlorobium chlorochromatii (strain CaD3)).